We begin with the raw amino-acid sequence, 169 residues long: ATP synthase subunit b (169 aa).

A helical transmembrane segment spans residues 11-31; sequence IPSFIAQIVNFGLLLGLLYLF.

The protein belongs to the ATPase B chain family. As to quaternary structure, F-type ATPases have 2 components, F(1) - the catalytic core - and F(0) - the membrane proton channel. F(1) has five subunits: alpha(3), beta(3), gamma(1), delta(1), epsilon(1). F(0) has three main subunits: a(1), b(2) and c(10-14). The alpha and beta chains form an alternating ring which encloses part of the gamma chain. F(1) is attached to F(0) by a central stalk formed by the gamma and epsilon chains, while a peripheral stalk is formed by the delta and b chains.

Its subcellular location is the cell membrane. Functionally, f(1)F(0) ATP synthase produces ATP from ADP in the presence of a proton or sodium gradient. F-type ATPases consist of two structural domains, F(1) containing the extramembraneous catalytic core and F(0) containing the membrane proton channel, linked together by a central stalk and a peripheral stalk. During catalysis, ATP synthesis in the catalytic domain of F(1) is coupled via a rotary mechanism of the central stalk subunits to proton translocation. Component of the F(0) channel, it forms part of the peripheral stalk, linking F(1) to F(0). The protein is ATP synthase subunit b of Dehalococcoides mccartyi (strain ATCC BAA-2100 / JCM 16839 / KCTC 5957 / BAV1).